A 108-amino-acid polypeptide reads, in one-letter code: RNA silencing suppressor (108 aa).

The interval 47–50 (RRRR) is basic. A C4-type zinc finger spans residues 57-78 (CHRCYRLWPPTVFTTRCDNKHC).

Belongs to the carlaviruses nucleic acid-binding protein family.

In terms of biological role, suppressor of viral-induced RNA silencing. Increases the accumulation of viral RNA and enhances viral cell-to-cell movement by inhibiting RNA silencing. This Solanum tuberosum (Potato) protein is RNA silencing suppressor.